Reading from the N-terminus, the 452-residue chain is LIM/homeobox protein lim-7 (452 aa).

LIM zinc-binding domains lie at 54 to 116 (AVCA…LFTT) and 117 to 179 (RCSR…LDNP). The interval 184-268 (SVPDYSKLNN…KKKDKQATRV (85 aa)) is disordered. 2 stretches are compositionally biased toward low complexity: residues 192-205 (NNNN…SSSN) and 217-227 (TLTSLDNNTSS). Residues 265–324 (ATRVRTVLNENQLKILRDCYSINSRPDATLKERLVEMTGLSARVIRVWFQNKRCKDKKRQ) constitute a DNA-binding region (homeobox). The tract at residues 347 to 376 (GIGPLMVQPATPHIDNTLGGPIDIQHFAQW) is LIM interaction domain (LID).

As to quaternary structure, interacts (via LID domain) with ceh-14 (via LIM zinc-binding domains 1 and 2). In terms of tissue distribution, expressed in gonadal sheath cells, URA motoneurons, and 10 additional cells near the isthmus and terminal bulb of the pharynx. Expressed in the ALA and BDU cells.

It localises to the nucleus. Functionally, probable DNA-binding transcriptional activator. This Caenorhabditis elegans protein is LIM/homeobox protein lim-7.